A 447-amino-acid chain; its full sequence is Phosphoglucosamine mutase (447 aa).

The active-site Phosphoserine intermediate is the Ser100. Residues Ser100, Asp239, Asp241, and Asp243 each contribute to the Mg(2+) site. Ser100 is modified (phosphoserine).

It belongs to the phosphohexose mutase family. Requires Mg(2+) as cofactor. Post-translationally, activated by phosphorylation.

The enzyme catalyses alpha-D-glucosamine 1-phosphate = D-glucosamine 6-phosphate. Functionally, catalyzes the conversion of glucosamine-6-phosphate to glucosamine-1-phosphate. In Thermoanaerobacter pseudethanolicus (strain ATCC 33223 / 39E) (Clostridium thermohydrosulfuricum), this protein is Phosphoglucosamine mutase.